The chain runs to 1322 residues: Serine/threonine-protein phosphatase UIS2 (1322 aa).

Residues 1–22 (MNISKFFLIFIPLVLFKYPANN) form the signal peptide. Residues 1 to 535 (MNISKFFLIF…NELKSTSNAM (535 aa)) are interaction with phosphorylated eIF2alpha. 2 stretches are compositionally biased toward basic and acidic residues: residues 267–279 (EKSA…KELN) and 288–326 (NSKK…KSEN). Disordered stretches follow at residues 267–326 (EKSA…KSEN), 613–646 (NTNT…SENN), 1066–1087 (NETP…IQPN), and 1170–1196 (EVPD…NKDD). The span at 631–646 (NNYTDGNEGNNNSENN) shows a compositional bias: low complexity.

Requires Mn(2+) as cofactor.

The enzyme catalyses O-phospho-L-seryl-[protein] + H2O = L-seryl-[protein] + phosphate. Protein phosphatase which dephosphorylates 'Ser-59' of translation factor eIF2alpha during the liver stage, thus enabling protein translation. The sequence is that of Serine/threonine-protein phosphatase UIS2 from Plasmodium berghei (strain Anka).